We begin with the raw amino-acid sequence, 307 residues long: UDP-3-O-acyl-N-acetylglucosamine deacetylase (307 aa).

Zn(2+) contacts are provided by histidine 78, histidine 241, and aspartate 245. Catalysis depends on histidine 268, which acts as the Proton donor.

Belongs to the LpxC family. It depends on Zn(2+) as a cofactor.

The catalysed reaction is a UDP-3-O-[(3R)-3-hydroxyacyl]-N-acetyl-alpha-D-glucosamine + H2O = a UDP-3-O-[(3R)-3-hydroxyacyl]-alpha-D-glucosamine + acetate. Its pathway is glycolipid biosynthesis; lipid IV(A) biosynthesis; lipid IV(A) from (3R)-3-hydroxytetradecanoyl-[acyl-carrier-protein] and UDP-N-acetyl-alpha-D-glucosamine: step 2/6. Functionally, catalyzes the hydrolysis of UDP-3-O-myristoyl-N-acetylglucosamine to form UDP-3-O-myristoylglucosamine and acetate, the committed step in lipid A biosynthesis. The chain is UDP-3-O-acyl-N-acetylglucosamine deacetylase from Verminephrobacter eiseniae (strain EF01-2).